Consider the following 232-residue polypeptide: 5'-methylthioadenosine/S-adenosylhomocysteine nucleosidase (232 aa).

Glu-12 (proton acceptor) is an active-site residue. Substrate-binding positions include Gly-78, Ile-152, and 173-174 (ME). Catalysis depends on Asp-197, which acts as the Proton donor.

The protein belongs to the PNP/UDP phosphorylase family. MtnN subfamily. As to quaternary structure, homodimer.

The catalysed reaction is S-adenosyl-L-homocysteine + H2O = S-(5-deoxy-D-ribos-5-yl)-L-homocysteine + adenine. It catalyses the reaction S-methyl-5'-thioadenosine + H2O = 5-(methylsulfanyl)-D-ribose + adenine. The enzyme catalyses 5'-deoxyadenosine + H2O = 5-deoxy-D-ribose + adenine. Its pathway is amino-acid biosynthesis; L-methionine biosynthesis via salvage pathway; S-methyl-5-thio-alpha-D-ribose 1-phosphate from S-methyl-5'-thioadenosine (hydrolase route): step 1/2. Catalyzes the irreversible cleavage of the glycosidic bond in both 5'-methylthioadenosine (MTA) and S-adenosylhomocysteine (SAH/AdoHcy) to adenine and the corresponding thioribose, 5'-methylthioribose and S-ribosylhomocysteine, respectively. Also cleaves 5'-deoxyadenosine, a toxic by-product of radical S-adenosylmethionine (SAM) enzymes, into 5-deoxyribose and adenine. Thus, is required for in vivo function of the radical SAM enzymes biotin synthase and lipoic acid synthase, that are inhibited by 5'-deoxyadenosine accumulation. The protein is 5'-methylthioadenosine/S-adenosylhomocysteine nucleosidase of Cronobacter sakazakii (strain ATCC BAA-894) (Enterobacter sakazakii).